Reading from the N-terminus, the 269-residue chain is MEMO1 family protein TV1383 (269 aa).

This sequence belongs to the MEMO1 family.

The sequence is that of MEMO1 family protein TV1383 from Thermoplasma volcanium (strain ATCC 51530 / DSM 4299 / JCM 9571 / NBRC 15438 / GSS1).